The primary structure comprises 194 residues: Orotate phosphoribosyltransferase (194 aa).

Position 117–125 (glutamate 117–serine 125) interacts with 5-phospho-alpha-D-ribose 1-diphosphate. Orotate is bound by residues serine 121 and arginine 149.

It belongs to the purine/pyrimidine phosphoribosyltransferase family. PyrE subfamily. In terms of assembly, homodimer. Requires Mg(2+) as cofactor.

The enzyme catalyses orotidine 5'-phosphate + diphosphate = orotate + 5-phospho-alpha-D-ribose 1-diphosphate. It participates in pyrimidine metabolism; UMP biosynthesis via de novo pathway; UMP from orotate: step 1/2. Catalyzes the transfer of a ribosyl phosphate group from 5-phosphoribose 1-diphosphate to orotate, leading to the formation of orotidine monophosphate (OMP). The protein is Orotate phosphoribosyltransferase of Maricaulis maris (strain MCS10) (Caulobacter maris).